We begin with the raw amino-acid sequence, 450 residues long: Chromosomal replication initiator protein DnaA (450 aa).

Residues 1 to 76 (MNLNDILKEL…KKILKQPVNI (76 aa)) are domain I, interacts with DnaA modulators. The interval 76–107 (ISFTYEQEYQKQLEKTESINKDHSDIISKKNK) is domain II. Positions 108-327 (KVNENTFENF…GSVSRLNFWS (220 aa)) are domain III, AAA+ region. Positions 151, 153, 154, and 155 each coordinate ATP. The tract at residues 328–450 (QQNPEEKVIT…DILKNKILTK (123 aa)) is domain IV, binds dsDNA.

The protein belongs to the DnaA family. In terms of assembly, oligomerizes as a right-handed, spiral filament on DNA at oriC.

It localises to the cytoplasm. Its subcellular location is the cell membrane. Its function is as follows. Plays an essential role in the initiation and regulation of chromosomal replication. ATP-DnaA binds to the origin of replication (oriC) to initiate formation of the DNA replication initiation complex once per cell cycle. Binds the DnaA box (a 9 base pair repeat at the origin) and separates the double-stranded (ds)DNA. Forms a right-handed helical filament on oriC DNA; dsDNA binds to the exterior of the filament while single-stranded (ss)DNA is stabiized in the filament's interior. The ATP-DnaA-oriC complex binds and stabilizes one strand of the AT-rich DNA unwinding element (DUE), permitting loading of DNA polymerase. After initiation quickly degrades to an ADP-DnaA complex that is not apt for DNA replication. Binds acidic phospholipids. This is Chromosomal replication initiator protein DnaA from Mycoplasma capricolum subsp. capricolum (strain California kid / ATCC 27343 / NCTC 10154).